Reading from the N-terminus, the 396-residue chain is MAKAKFERNKPHVNVGTIGHVDHGKTTLTAAIATVAAKTFGGEAKDYAAIDSAPEEKARGITINTSHIEYDTADRHYAHVDCPGHADYVKNMITGAAQMDGAILVVSATDGPMPQTREHILLSRQVGVPYIMVFMNKCDMVDDEELLELVEMEVRELLSDYDFPGDDTPIIKGSALEALNGKDGKYGEPAVIELLQTLDTYIPEPERDIDKPFLMPIEDVFSISGRGTVVTGRVESGIVKVGDEIEIVGIRDTQKTTCTGVEMFRKLLDEGRAGENCGVLLRGTKREDVQRGQVLAKPGSITPHTKFDAEVYVLSKEEGGRHTPFLNGYRPQFYFRTTDVTGAISLQEGTEMVMPGDNVEMSVELIHPIAMDKGLRFAIREGGRTVGAGVVANVKD.

A tr-type G domain is found at 10–206; that stretch reads KPHVNVGTIG…TLDTYIPEPE (197 aa). Residues 19-26 form a G1 region; sequence GHVDHGKT. 19–26 is a GTP binding site; sequence GHVDHGKT. Thr26 serves as a coordination point for Mg(2+). The segment at 60 to 64 is G2; it reads GITIN. Positions 81–84 are G3; the sequence is DCPG. GTP contacts are provided by residues 81–85 and 136–139; these read DCPGH and NKCD. Residues 136–139 form a G4 region; it reads NKCD. The segment at 174-176 is G5; sequence SAL.

Belongs to the TRAFAC class translation factor GTPase superfamily. Classic translation factor GTPase family. EF-Tu/EF-1A subfamily. Monomer.

It localises to the cytoplasm. It carries out the reaction GTP + H2O = GDP + phosphate + H(+). In terms of biological role, GTP hydrolase that promotes the GTP-dependent binding of aminoacyl-tRNA to the A-site of ribosomes during protein biosynthesis. The polypeptide is Elongation factor Tu 1 (Psychrobacter sp. (strain PRwf-1)).